The sequence spans 42 residues: Potassium channel toxin gamma-KTx 1.10 (42 aa).

4 disulfides stabilise this stretch: C5-C23, C11-C34, C20-C39, and C24-C41.

In terms of tissue distribution, expressed by the venom gland.

It is found in the secreted. Functionally, blocks human Kv11.1/KCNH2/ERG1 potassium channels (reversible, IC(50)=3.4 nM). At high toxin concentrations, block of Kv11.1/KCNH2/ERG1 macroscopic current is almost complete. Does not accelerate the kinetics of the closing process and has no effect on the activation and inactivation kinetics of the Kv11.1/KCNH2/ERG1 channels. This chain is Potassium channel toxin gamma-KTx 1.10, found in Centruroides margaritatus (Central American bark Scorpion).